We begin with the raw amino-acid sequence, 235 residues long: Ribonuclease PH (235 aa).

Residues R86 and 124–126 (GTR) each bind phosphate.

Belongs to the RNase PH family. In terms of assembly, homohexameric ring arranged as a trimer of dimers.

The catalysed reaction is tRNA(n+1) + phosphate = tRNA(n) + a ribonucleoside 5'-diphosphate. In terms of biological role, phosphorolytic 3'-5' exoribonuclease that plays an important role in tRNA 3'-end maturation. Removes nucleotide residues following the 3'-CCA terminus of tRNAs; can also add nucleotides to the ends of RNA molecules by using nucleoside diphosphates as substrates, but this may not be physiologically important. Probably plays a role in initiation of 16S rRNA degradation (leading to ribosome degradation) during starvation. The polypeptide is Ribonuclease PH (Legionella pneumophila (strain Corby)).